A 341-amino-acid chain; its full sequence is Anthranilate phosphoribosyltransferase (341 aa).

5-phospho-alpha-D-ribose 1-diphosphate contacts are provided by residues glycine 79, 82–83, threonine 87, 89–92, 107–115, and serine 119; these read GD, NIST, and KHGNRAVSS. Glycine 79 contacts anthranilate. Serine 91 serves as a coordination point for Mg(2+). Asparagine 110 is an anthranilate binding site. Residue arginine 165 participates in anthranilate binding. The Mg(2+) site is built by aspartate 224 and glutamate 225.

It belongs to the anthranilate phosphoribosyltransferase family. Homodimer. The cofactor is Mg(2+).

The enzyme catalyses N-(5-phospho-beta-D-ribosyl)anthranilate + diphosphate = 5-phospho-alpha-D-ribose 1-diphosphate + anthranilate. Its pathway is amino-acid biosynthesis; L-tryptophan biosynthesis; L-tryptophan from chorismate: step 2/5. Catalyzes the transfer of the phosphoribosyl group of 5-phosphorylribose-1-pyrophosphate (PRPP) to anthranilate to yield N-(5'-phosphoribosyl)-anthranilate (PRA). The protein is Anthranilate phosphoribosyltransferase of Bacillus cereus (strain B4264).